The sequence spans 73 residues: uncharacterized protein (73 aa).

The helical transmembrane segment at 54–72 (VSFIVAPTVMQVQCLFFFI) threads the bilayer.

Its subcellular location is the membrane. This is an uncharacterized protein from Saccharomyces cerevisiae (strain ATCC 204508 / S288c) (Baker's yeast).